Here is a 164-residue protein sequence, read N- to C-terminus: Cyclin-dependent kinase inhibitor 1 (164 aa).

Residue S2 is modified to N-acetylserine. Residue S2 forms a Glycyl serine ester (Ser-Gly) (interchain with G-Cter in ubiquitin) linkage. The C4-type zinc-finger motif lies at 13-41 (CGSKACRRLFGPVDSEQLSRDCDALMAGC). The tract at residues 17–24 (ACRRLFGP) is required for binding cyclins. The tract at residues 53–58 (FVTETP) is required for binding CDKs. The interval 76 to 164 (LYLPTGPRRG…RRLIFSKRKP (89 aa)) is disordered. A Phosphothreonine; by LKB1 modification is found at T80. The residue at position 114 (S114) is a Phosphoserine; by GSK3-beta. S130 bears the Phosphoserine mark. The short motif at 140 to 164 (RKRRQTSMTDFYHSKRRLIFSKRKP) is the PIP-box K+4 motif element. The short motif at 141-156 (KRRQTSMTDFYHSKRR) is the Nuclear localization signal element. T145 carries the phosphothreonine; by PKA, PKB/AKT1, PIM1 and PIM2 modification. S146 carries the post-translational modification Phosphoserine; by PKC and NUAK1. The segment at 152–164 (HSKRRLIFSKRKP) is interaction with TRIM39. A compositionally biased stretch (basic residues) spans 153–164 (SKRRLIFSKRKP). Phosphoserine; by PKC; in vitro is present on S160.

This sequence belongs to the CDI family. In terms of assembly, interacts with HDAC1; the interaction is prevented by competitive binding of C10orf90/FATS to HDAC1 facilitating acetylation and protein stabilization of CDKN1A/p21. Interacts with MKRN1. Interacts with PSMA3. Interacts with PCNA. Component of the ternary complex, cyclin D-CDK4-CDKN1A. Interacts (via its N-terminal domain) with CDK4; the interaction promotes the assembly of the cyclin D-CDK4 complex, its nuclear translocation and promotes the cyclin D-dependent enzyme activity of CDK4. Binding to CDK2 leads to CDK2/cyclin E inactivation at the G1-S phase DNA damage checkpoint, thereby arresting cells at the G1-S transition during DNA repair. Interacts with PIM1. Interacts with STK11 and NUAK1. Interacts wih DTL. Interacts with isoform 1 and isoform 2 of TRIM39. Interacts with PKP3; the interaction sequesters CDKN1A to the cytoplasm thereby repressing its role as an inhibitor of CDK4- and CDK6-driven RB1 phosphorylation. In terms of processing, phosphorylation of Thr-145 by Akt or of Ser-146 by PKC impairs binding to PCNA. Phosphorylation at Ser-114 by GSK3-beta enhances ubiquitination by the DCX(DTL) complex. Phosphorylation of Thr-145 by PIM2 enhances CDKN1A stability and inhibits cell proliferation. Phosphorylation of Thr-145 by PIM1 results in the relocation of CDKN1A to the cytoplasm and enhanced CDKN1A protein stability. UV radiation-induced phosphorylation at Thr-80 by LKB1 and at Ser-146 by NUAK1 leads to its degradation. Ubiquitinated by MKRN1; leading to polyubiquitination and 26S proteasome-dependent degradation. Ubiquitinated by the DCX(DTL) complex, also named CRL4(CDT2) complex, leading to its degradation during S phase or following UV irradiation. Ubiquitination by the DCX(DTL) complex is essential to control replication licensing and is PCNA-dependent: interacts with PCNA via its PIP-box, while the presence of the containing the 'K+4' motif in the PIP box, recruit the DCX(DTL) complex, leading to its degradation. Ubiquitination at Ser-2 leads to degradation by the proteasome pathway. Ubiquitinated by RNF114; leading to proteasomal degradation. Post-translationally, acetylation leads to protein stability. Acetylated in vitro on Lys-141, Lys-154, Lys-161 and Lys-163. Deacetylation by HDAC1 is prevented by competitive binding of C10orf90/FATS to HDAC1. As to expression, expressed in all adult tissues, with 5-fold lower levels observed in the brain.

It localises to the cytoplasm. The protein resides in the nucleus. Plays an important role in controlling cell cycle progression and DNA damage-induced G2 arrest. Involved in p53/TP53 mediated inhibition of cellular proliferation in response to DNA damage. Also involved in p53-independent DNA damage-induced G2 arrest mediated by CREB3L1 in astrocytes and osteoblasts. Binds to and inhibits cyclin-dependent kinase activity, preventing phosphorylation of critical cyclin-dependent kinase substrates and blocking cell cycle progression. Functions in the nuclear localization and assembly of cyclin D-CDK4 complex and promotes its kinase activity towards RB1. At higher stoichiometric ratios, inhibits the kinase activity of the cyclin D-CDK4 complex. Inhibits DNA synthesis by DNA polymerase delta by competing with POLD3 for PCNA binding. Negatively regulates the CDK4- and CDK6-driven phosphorylation of RB1 in keratinocytes, thereby resulting in the release of E2F1 and subsequent transcription of E2F1-driven G1/S phase promoting genes. The chain is Cyclin-dependent kinase inhibitor 1 from Homo sapiens (Human).